We begin with the raw amino-acid sequence, 221 residues long: Protein GrpE (221 aa).

The segment at 1-43 is disordered; sequence MFTNPFGRKKDMSDDQKKNNQPDTEADNAENIKFAADDTELRA. Residues 8–20 show a composition bias toward basic and acidic residues; that stretch reads RKKDMSDDQKKNN.

This sequence belongs to the GrpE family. Homodimer.

The protein localises to the cytoplasm. Its function is as follows. Participates actively in the response to hyperosmotic and heat shock by preventing the aggregation of stress-denatured proteins, in association with DnaK and GrpE. It is the nucleotide exchange factor for DnaK and may function as a thermosensor. Unfolded proteins bind initially to DnaJ; upon interaction with the DnaJ-bound protein, DnaK hydrolyzes its bound ATP, resulting in the formation of a stable complex. GrpE releases ADP from DnaK; ATP binding to DnaK triggers the release of the substrate protein, thus completing the reaction cycle. Several rounds of ATP-dependent interactions between DnaJ, DnaK and GrpE are required for fully efficient folding. The chain is Protein GrpE from Deinococcus radiodurans (strain ATCC 13939 / DSM 20539 / JCM 16871 / CCUG 27074 / LMG 4051 / NBRC 15346 / NCIMB 9279 / VKM B-1422 / R1).